Reading from the N-terminus, the 172-residue chain is Peptidyl-tRNA hydrolase (172 aa).

Tyrosine 10 contacts tRNA. Residue histidine 15 is the Proton acceptor of the active site. Positions 59, 61, and 101 each coordinate tRNA.

Belongs to the PTH family. Monomer.

It is found in the cytoplasm. It carries out the reaction an N-acyl-L-alpha-aminoacyl-tRNA + H2O = an N-acyl-L-amino acid + a tRNA + H(+). In terms of biological role, hydrolyzes ribosome-free peptidyl-tRNAs (with 1 or more amino acids incorporated), which drop off the ribosome during protein synthesis, or as a result of ribosome stalling. Catalyzes the release of premature peptidyl moieties from peptidyl-tRNA molecules trapped in stalled 50S ribosomal subunits, and thus maintains levels of free tRNAs and 50S ribosomes. The protein is Peptidyl-tRNA hydrolase of Rubrobacter xylanophilus (strain DSM 9941 / JCM 11954 / NBRC 16129 / PRD-1).